A 130-amino-acid polypeptide reads, in one-letter code: Small ribosomal subunit protein uS9 (130 aa).

Belongs to the universal ribosomal protein uS9 family.

In Pseudomonas putida (strain W619), this protein is Small ribosomal subunit protein uS9.